Reading from the N-terminus, the 230-residue chain is Sugar fermentation stimulation protein homolog (230 aa).

It belongs to the SfsA family.

The chain is Sugar fermentation stimulation protein homolog from Clostridium kluyveri (strain NBRC 12016).